A 308-amino-acid chain; its full sequence is MWAWGWAAAALLWLQTAGAGARQELKKSRQLFARVDSPNITTSNREGFPGSVKPPEASGPELSDAHMTWLNFVRRPDDGSSRKRCRGRDKKSRGLSGLPGPPGPPGPPGPPGSPGVGVTPEALLQEFQEILKEATELRFSGLPDTLLPQEPSQRLVVEAFYCRLKGPVLVDKKTLVELQGFQAPTTQGAFLRGSGLSLSLGRFTAPVSAIFQFSASLHVDHSELQGRGRLRTRDMVRVLICIESLCHRHTSLEAVSGLESNSRVFTVQVQGLLHLQSGQYVSVFVDNSSGAVLTIQNTSSFSGMLLGT.

An N-terminal signal peptide occupies residues 1 to 21 (MWAWGWAAAALLWLQTAGAGA). Residues 36-119 (DSPNITTSNR…PPGSPGVGVT (84 aa)) form a disordered region. N39 carries N-linked (GlcNAc...) asparagine glycosylation. Over residues 82-93 (RKRCRGRDKKSR) the composition is skewed to basic residues. Positions 99-113 (PGPPGPPGPPGPPGS) are enriched in pro residues. The C1q domain occupies 153 to 308 (QRLVVEAFYC…SSFSGMLLGT (156 aa)).

It belongs to the adipolin/erythroferrone family. As to quaternary structure, homomultimer; disulfide-linked. Adipolin fC1QTNF12: homotrimer; disulfide-linked. Adipolin gC1QTNF12: homodimer; disulfide-linked. May interact with ERFE. Processed into Adipolin fC1QTNF12 and Adipolin gC1QTNF12 by FURIN. Insulin enhances endogenous C1QTNF12 cleavage. As to expression, widely expressed, with high expression in subcutaneous and epididymal white adipose tissues and brown adipose tissue. Expressed in adipocytes (at protein level).

The protein resides in the secreted. In terms of biological role, insulin-sensitizing adipocyte-secreted protein (adipokine) that regulates glucose metabolism in liver and adipose tissue. Promotes glucose uptake in adipocytes and suppresses de novo glucose production in hepatocytes via the PI3K-Akt signaling pathway. Administration lead to reduction of blood glucose. Able to attenuate inflammation in fat tissue. Functionally, acts by activating the Akt signaling in hepatocytes and adipocytes. Not able to increase insulin-stimulated glucose uptake in adipocytes. Acts by activating the MAP kinase. Increases insulin-stimulated glucose uptake in adipocytes. This chain is Adipolin (C1qtnf12), found in Mus musculus (Mouse).